The sequence spans 196 residues: Guanylate kinase (196 aa).

The region spanning Gly8–Ala191 is the Guanylate kinase-like domain. Gly15–Gly22 lines the ATP pocket.

The protein belongs to the guanylate kinase family.

Its subcellular location is the cytoplasm. It catalyses the reaction GMP + ATP = GDP + ADP. Its function is as follows. Essential for recycling GMP and indirectly, cGMP. This chain is Guanylate kinase, found in Bifidobacterium longum (strain NCC 2705).